We begin with the raw amino-acid sequence, 232 residues long: Uracil-DNA glycosylase (232 aa).

D66 serves as the catalytic Proton acceptor.

This sequence belongs to the uracil-DNA glycosylase (UDG) superfamily. UNG family.

It localises to the cytoplasm. It catalyses the reaction Hydrolyzes single-stranded DNA or mismatched double-stranded DNA and polynucleotides, releasing free uracil.. In terms of biological role, excises uracil residues from the DNA which can arise as a result of misincorporation of dUMP residues by DNA polymerase or due to deamination of cytosine. The polypeptide is Uracil-DNA glycosylase (Lactobacillus helveticus (strain DPC 4571)).